The primary structure comprises 516 residues: Na(+)/H(+) antiporter NhaB (516 aa).

Transmembrane regions (helical) follow at residues 23–43 (LALI…PFVA), 61–80 (CYPL…IGMT), 97–117 (LLLM…LFVF), 120–140 (LLLG…AAAF), 144–164 (FLDA…FYGI), 202–222 (LMMH…VGEP), 238–258 (FFLR…LTCL), 303–323 (ALIG…VGLI), 348–368 (TEAL…AVII), 391–411 (LFYL…VGTV), 447–467 (ATPN…APLI), and 475–495 (VWMA…CVEF).

It belongs to the NhaB Na(+)/H(+) (TC 2.A.34) antiporter family.

Its subcellular location is the cell inner membrane. It catalyses the reaction 2 Na(+)(in) + 3 H(+)(out) = 2 Na(+)(out) + 3 H(+)(in). Functionally, na(+)/H(+) antiporter that extrudes sodium in exchange for external protons. The polypeptide is Na(+)/H(+) antiporter NhaB (Klebsiella pneumoniae subsp. pneumoniae (strain ATCC 700721 / MGH 78578)).